The chain runs to 240 residues: 2,3,4,5-tetrahydropyridine-2,6-dicarboxylate N-acetyltransferase (240 aa).

The protein belongs to the transferase hexapeptide repeat family. DapH subfamily.

The catalysed reaction is (S)-2,3,4,5-tetrahydrodipicolinate + acetyl-CoA + H2O = L-2-acetamido-6-oxoheptanedioate + CoA. The protein operates within amino-acid biosynthesis; L-lysine biosynthesis via DAP pathway; LL-2,6-diaminopimelate from (S)-tetrahydrodipicolinate (acetylase route): step 1/3. Catalyzes the transfer of an acetyl group from acetyl-CoA to tetrahydrodipicolinate. This is 2,3,4,5-tetrahydropyridine-2,6-dicarboxylate N-acetyltransferase from Shouchella clausii (strain KSM-K16) (Alkalihalobacillus clausii).